A 591-amino-acid chain; its full sequence is L-fucose isomerase (591 aa).

Active-site proton acceptor residues include E337 and D361. Mn(2+) is bound by residues E337, D361, and H528.

The protein belongs to the L-fucose isomerase family. Homohexamer. The cofactor is Mn(2+).

It is found in the cytoplasm. The enzyme catalyses L-fucose = L-fuculose. Its pathway is carbohydrate degradation; L-fucose degradation; L-lactaldehyde and glycerone phosphate from L-fucose: step 1/3. Its function is as follows. Converts the aldose L-fucose into the corresponding ketose L-fuculose. This Salmonella paratyphi B (strain ATCC BAA-1250 / SPB7) protein is L-fucose isomerase.